The following is a 284-amino-acid chain: Tropomyosin-1 (284 aa).

Disordered stretches follow at residues 1 to 26 (MDAI…DTCE) and 96 to 124 (EEDL…DENN). Residues 1–276 (MDAIKKKMQA…YKSLADEMDS (276 aa)) adopt a coiled-coil conformation. Basic and acidic residues predominate over residues 12 to 26 (KLEKDNAMDKADTCE). Over residues 107–121 (GTAQQKLLEAQQSAD) the composition is skewed to polar residues.

It belongs to the tropomyosin family. Homodimer.

In terms of biological role, tropomyosin, in association with the troponin complex, plays a central role in the calcium dependent regulation of muscle contraction. The chain is Tropomyosin-1 from Bombyx mori (Silk moth).